The sequence spans 473 residues: 3-isopropylmalate dehydratase large subunit (473 aa).

[4Fe-4S] cluster contacts are provided by C348, C408, and C411. Residues 421–440 form a disordered region; the sequence is GDEASASSSNRNFIGRQGSK.

Belongs to the aconitase/IPM isomerase family. LeuC type 1 subfamily. Heterodimer of LeuC and LeuD. Requires [4Fe-4S] cluster as cofactor.

It catalyses the reaction (2R,3S)-3-isopropylmalate = (2S)-2-isopropylmalate. It functions in the pathway amino-acid biosynthesis; L-leucine biosynthesis; L-leucine from 3-methyl-2-oxobutanoate: step 2/4. Catalyzes the isomerization between 2-isopropylmalate and 3-isopropylmalate, via the formation of 2-isopropylmaleate. The chain is 3-isopropylmalate dehydratase large subunit from Haloferax volcanii (strain ATCC 29605 / DSM 3757 / JCM 8879 / NBRC 14742 / NCIMB 2012 / VKM B-1768 / DS2) (Halobacterium volcanii).